A 218-amino-acid chain; its full sequence is PEDIGQSPGVPTPDGDKVDLEAFSEFTKIITPAITRVVDFAKKLPMFSELPCEDQIILLKGCCMEIMSLRAAVRYDPESETLTLSGEMAVKREQLKNGGLGVVSDAIFDLGKSLAQFNLDDSEVALLQAVLLMSSDRSGLTSVDKIEKCQETYLLAFEHYINHRKHNIPHFWPKLLMKVTDLRMIGACHASRFLHMKVECPNELFPPLFLEVFEDQEV.

Positions 1 to 215 constitute an NR LBD domain; that stretch reads PEDIGQSPGV…PPLFLEVFED (215 aa). R36 and S85 together coordinate 3,3',5-triiodo-L-thyronine.

It belongs to the nuclear hormone receptor family. NR1 subfamily.

The protein localises to the nucleus. Nuclear hormone receptor that can act as a repressor or activator of transcription. High affinity receptor for thyroid hormones, including triiodothyronine and thyroxine. The polypeptide is Thyroid hormone receptor alpha (thra) (Oncorhynchus mykiss (Rainbow trout)).